The following is a 209-amino-acid chain: MTGTGDVNLKIKEIEMSHLEERFFNFVKKLGRFNKRSMFGGVGLFNEDAMFSLVTDGRLYVRGGGEVDARFEELGCERFKHVKKTTIATVNYFDVTELFEKKPASLLSIVQEAMENSRLEREFKKSKENRRLRDLPNMQLTLERMVKKAGVPDVDSFLEIGAVDVFKKVNHTYGGDVDVKLLWKFAGAESGVHWTLLQEPAKQALLQQV.

It belongs to the Sxy/TfoX family.

Its function is as follows. Required for DNA transformation jointly with TfoY (tfoX2). This is DNA transformation protein TfoX1 from Aliivibrio fischeri (strain ATCC 700601 / ES114) (Vibrio fischeri).